The following is a 101-amino-acid chain: Small ribosomal subunit protein uS14 (101 aa).

A disordered region spans residues 1-21 (MAKVSLIKKNESRKKKSQSLH). The segment covering 11–21 (ESRKKKSQSLH) has biased composition (basic residues).

This sequence belongs to the universal ribosomal protein uS14 family. As to quaternary structure, part of the 30S ribosomal subunit. Contacts proteins S3 and S10.

Functionally, binds 16S rRNA, required for the assembly of 30S particles and may also be responsible for determining the conformation of the 16S rRNA at the A site. This is Small ribosomal subunit protein uS14 from Rickettsia canadensis (strain McKiel).